We begin with the raw amino-acid sequence, 1298 residues long: MSTDNSFGLMRIGLATAEDIRRWSYGEVKKPETINYRTLKPEKDGLFCEKIFGPTRDWECACGKYKRVRFKGIICERCGVEVTRSKVRRDRMGHIELAAPVTHIWYFKGVPSRLGYLLDLAPKDLEKVIYFAAYMITSVDEEARHRDLANLQAEYDQETRVLADQRDSDIAAVAADLEKDLAKLESEGAKAAEKKKARDAADKTMAQIRKRADAELDRKEQVWDRFKNLKVADLEGDEGLYRAMRDKYGQYFEGSMGAEAIQRRLQTFDLEAESEMLRETIKTGKGQRKTRALKRLKVVNAFLTTDNSPEGMVLDAVPVIPPELRPMVQLDGGRFATSDLNDLYRRVINRNNRLKRLLDLGAPEIIVNNEKRMLQEAVDSLFDNGRRGRPVTGPGNRPLKSLSDMLKGKQGRFRQNLLGKRVDYSGRSVIVVGPQLKLHQCGLPKQMALELFKPFVMKRLVDLNHAQNIKSAKRMVERFRPQVWDVLEEVITEHPVLLNRAPTLHRLGIQAFEPQLVEGKALQLHPLVCSAFNADFDGDQMAVHLPLSPEAQAEARLLMLSSHNILKPSDGRAVAVPAQDMIIGLNHLTTVRPDEVGAGNLYATVGEAIMAFDGGDLHLNAPARIGVEGFVPSAAVPAPEGWSEGEIALIETTLGKVLFNELLPDDYPWLDKQATKGTLGQLVNDLAERYPMVVTAQTLDNLKDAGFHWGTWSGVTVAISDITSDFDKAAIMEGYEEQAQRVQQQYDKGLIADDERRSELIDIWNKATDEVAAAMKDGLPELNTINRMVSSGARGNWLQVRQIAGIRGLVANPKGEIIPRPIKSSYREGLSVLEYFSATHGARKGLADTALKTANSGYLTRRLVDVSQDVIVREDDCGTERGLSVTIAAPNADGELVAHEQVENSAFARTLAQDVTGEDGTVLAAAGADVGDVLIGELVAAGVTEIKVRSVLTCESAVGTCAKCYGRSMATGQLADIGEAVGIIAAQSIGEPGTQLTMRTFHTGGVASADDITQGLPRIQELFEARTPKGVAPISEVAGRVTIEDTETSVRLLLTPDDGSEEIAYPVLRRARILVADGEHVPVGTQLVAGAVDPKQVLRVLGPRAAQRFLVDEVQNVYQSQGVGIHDKHVEVIVRQMLRRITVIESGDTDLLPGELTDRARFVAANRAAVAEGRQPASGRDELMGITKASLATDSWLSAASFQETTRVLTQAAMEGKSDPLLGLKENVIIGKLIPAGTGLDRYTKTVVEPTEEAKANLFASPAGFADFDYPGLDQSLGENDFHAVSLDDYDRGGDFRA.

Zn(2+)-binding residues include cysteine 60, cysteine 62, cysteine 75, and cysteine 78. Mg(2+) is bound by residues aspartate 535, aspartate 537, and aspartate 539. Cysteine 877, cysteine 954, cysteine 961, and cysteine 964 together coordinate Zn(2+).

It belongs to the RNA polymerase beta' chain family. The RNAP catalytic core consists of 2 alpha, 1 beta, 1 beta' and 1 omega subunit. When a sigma factor is associated with the core the holoenzyme is formed, which can initiate transcription. It depends on Mg(2+) as a cofactor. Zn(2+) is required as a cofactor.

The catalysed reaction is RNA(n) + a ribonucleoside 5'-triphosphate = RNA(n+1) + diphosphate. Functionally, DNA-dependent RNA polymerase catalyzes the transcription of DNA into RNA using the four ribonucleoside triphosphates as substrates. The protein is DNA-directed RNA polymerase subunit beta' of Micrococcus luteus (strain ATCC 4698 / DSM 20030 / JCM 1464 / CCM 169 / CCUG 5858 / IAM 1056 / NBRC 3333 / NCIMB 9278 / NCTC 2665 / VKM Ac-2230) (Micrococcus lysodeikticus).